The chain runs to 232 residues: Pseudaminic acid cytidylyltransferase (232 aa).

The protein belongs to the CMP-NeuNAc synthase family. Mg(2+) serves as cofactor.

It carries out the reaction pseudaminate + CTP = CMP-pseudaminate + diphosphate. Catalyzes the final step in the biosynthesis of pseudaminic acid, a sialic-acid-like sugar that is used to modify flagellin. Mediates the activation of pseudaminic acid with CMP by forming CMP-pseudaminic acid. This Campylobacter jejuni subsp. jejuni serotype O:23/36 (strain 81-176) protein is Pseudaminic acid cytidylyltransferase (pseF).